The chain runs to 148 residues: Large ribosomal subunit protein bL9 (148 aa).

It belongs to the bacterial ribosomal protein bL9 family.

Binds to the 23S rRNA. This chain is Large ribosomal subunit protein bL9, found in Pseudomonas fluorescens (strain SBW25).